A 310-amino-acid chain; its full sequence is Nucleotide-binding protein Mmc1_3333 (310 aa).

19-26 (GLSGAGKS) contacts ATP.

The protein belongs to the RapZ-like family.

Displays ATPase and GTPase activities. This chain is Nucleotide-binding protein Mmc1_3333, found in Magnetococcus marinus (strain ATCC BAA-1437 / JCM 17883 / MC-1).